Consider the following 183-residue polypeptide: NADH-ubiquinone oxidoreductase 20.8 kDa subunit (183 aa).

2 CHCH domains span residues 44 to 87 (GARC…IADI) and 88 to 130 (NKSC…LGLK). Short sequence motifs (cx9C motif) lie at residues 47-57 (CRDYNDDFMQC), 69-79 (CLKEGRRVTRC), 91-101 (CLEEFRKHWTC), and 112-122 (CRPAEWKLNKC). 4 disulfide bridges follow: cysteine 47-cysteine 79, cysteine 57-cysteine 69, cysteine 91-cysteine 122, and cysteine 101-cysteine 112. The interval 161–183 (EPFVPPTQTGDNNKAPAAASSSS) is disordered.

Belongs to the complex I NDUFA8 subunit family. Complex I is composed of about 40 different subunits. This is a component of the hydrophobic fraction. Iron-sulfur cluster serves as cofactor.

Its subcellular location is the mitochondrion inner membrane. Accessory subunit of the mitochondrial membrane respiratory chain NADH dehydrogenase (Complex I), that is believed not to be involved in catalysis. Complex I functions in the transfer of electrons from NADH to the respiratory chain. The immediate electron acceptor for the enzyme is believed to be ubiquinone. The protein is NADH-ubiquinone oxidoreductase 20.8 kDa subunit of Neurospora crassa (strain ATCC 24698 / 74-OR23-1A / CBS 708.71 / DSM 1257 / FGSC 987).